The primary structure comprises 1091 residues: Sodium/potassium exporting P-type ATPase 2 (1091 aa).

The Cytoplasmic segment spans residues 1 to 63 (MSEGTVKENN…LGDDTKIDYK (63 aa)). Residues 64–84 (AMVLHQVCNAMIMVLVISMAI) traverse the membrane as a helical segment. Over 85 to 90 (SFAVRD) the chain is Extracellular. Residues 91–111 (WITGGVISFVIAVNVLIGLVQ) traverse the membrane as a helical segment. The Cytoplasmic portion of the chain corresponds to 112-282 (EYKATKTMNS…TNVGTPLHRK (171 aa)). A helical membrane pass occupies residues 283 to 303 (LSKLAVLLFWIAVLFAIIVMA). The Extracellular portion of the chain corresponds to 304–312 (SQKFDVDKR). Residues 313–333 (VAIYAICVALSMIPSSLVVVL) traverse the membrane as a helical segment. Residues 334 to 815 (TITMSVGAAV…RRMTDNIQKF (482 aa)) are Cytoplasmic-facing. Catalysis depends on Asp369, which acts as the 4-aspartylphosphate intermediate. Mg(2+) contacts are provided by Asp369 and Thr371. Residues Thr371 and Glu483 each contribute to the ATP site. Residues 499–525 (ALTGEKSTNQSNENDQSSLSQHNEKPG) form a disordered region. The segment covering 503–519 (EKSTNQSNENDQSSLSQ) has biased composition (polar residues). The ATP site is built by Lys561, Arg606, Thr673, Gly674, Asp675, Arg732, and Lys738. Residue Asp757 participates in Mg(2+) binding. Asn760 contributes to the ATP binding site. A helical membrane pass occupies residues 816–836 (VLQLLAENVAQALYLIIGLVF). At 837 to 848 (RDENGKSVFPLS) the chain is on the extracellular side. Residues 849-869 (PVEVLWIIVVTSCFPAMGLGL) traverse the membrane as a helical segment. Over 870–885 (EKAAPDLMDRPPHDSE) the chain is Cytoplasmic. Residues 886 to 906 (VGIFTWEVIIDTFAYGIIMTG) form a helical membrane-spanning segment. At 907–943 (SCMASFTGSLYGINSGRLGHDCDGTYNSSCRDVYRSR) the chain is on the extracellular side. The chain crosses the membrane as a helical span at residues 944 to 964 (SAAFATMTWCALILAWEVVDM). The Cytoplasmic portion of the chain corresponds to 965-991 (RRSFFRMHPDTDSPVKEFFRSIWGNQF). The helical transmembrane segment at 992–1012 (LFWSIIFGFVSAFPVVYIPVI) threads the bilayer. The Extracellular portion of the chain corresponds to 1013-1021 (NDKVFLHKP). The helical transmembrane segment at 1022-1042 (IGAEWGLAIAFTIAFWIGAEL) threads the bilayer. Topologically, residues 1043 to 1091 (YKCGKRRYFKTQRAHNPENDLESNNKRDPFEAYSTSTTIHTEVNIGIKQ) are cytoplasmic.

The protein belongs to the cation transport ATPase (P-type) (TC 3.A.3) family. Type IID subfamily. It depends on Mg(2+) as a cofactor. The active site is phosphorylated in presence of sodium or potassium and in conditions of higher pH. Not phosphorylated in presence of calcium ions.

The protein resides in the cell membrane. It carries out the reaction Na(+)(in) + ATP + H2O = Na(+)(out) + ADP + phosphate + H(+). It catalyses the reaction K(+)(in) + ATP + H2O = K(+)(out) + ADP + phosphate + H(+). Its function is as follows. Catalyzes the hydrolysis of ATP coupled with the export of sodium and potassium from the cell. May export potassium less efficiently. May transport other cations such as lithium. Sodium/potassium efflux ATPases are involved in salt tolerance and maintaining the membrane potential across the plasma membrane in high salinity (Na+) or alkaline (K+) environments. In Saccharomyces cerevisiae (strain ATCC 204508 / S288c) (Baker's yeast), this protein is Sodium/potassium exporting P-type ATPase 2.